The primary structure comprises 266 residues: Hydroxyethylthiazole kinase (266 aa).

Met39 serves as a coordination point for substrate. Lys115 and Thr160 together coordinate ATP. Substrate is bound at residue Gly187.

Belongs to the Thz kinase family. Mg(2+) is required as a cofactor.

It catalyses the reaction 5-(2-hydroxyethyl)-4-methylthiazole + ATP = 4-methyl-5-(2-phosphooxyethyl)-thiazole + ADP + H(+). Its pathway is cofactor biosynthesis; thiamine diphosphate biosynthesis; 4-methyl-5-(2-phosphoethyl)-thiazole from 5-(2-hydroxyethyl)-4-methylthiazole: step 1/1. In terms of biological role, catalyzes the phosphorylation of the hydroxyl group of 4-methyl-5-beta-hydroxyethylthiazole (THZ). In Staphylococcus aureus (strain MSSA476), this protein is Hydroxyethylthiazole kinase.